A 2596-amino-acid polypeptide reads, in one-letter code: Cadherin EGF LAG seven-pass G-type receptor fmi-1 (2596 aa).

The first 22 residues, 1 to 22, serve as a signal peptide directing secretion; sequence MMLDRIMFLLFFILSLVIGSFS. Residues 23–2229 lie on the Extracellular side of the membrane; that stretch reads EYLDDKYYST…IVRVAQMDNM (2207 aa). Cadherin domains follow at residues 166–270, 271–375, 376–479, 480–581, 582–682, 683–784, 785–892, and 893–1000; these read QQEK…SPIF, EKDS…APVF, ASDS…APTL, IAAQ…APTF, DKKE…APYF, NDHP…SPQF, TSSS…APTF, and EQLS…KPAL. N-linked (GlcNAc...) asparagine glycosylation is found at Asn381, Asn387, Asn562, Asn587, Asn765, and Asn824. N-linked (GlcNAc...) asparagine glycans are attached at residues Asn1030 and Asn1263. Residues 1251–1287 form the EGF-like 1 domain; the sequence is RIDECYRGRCSNNSTCVAFENTYQCECKPGWIGRHCE. Intrachain disulfides connect Cys1255–Cys1266, Cys1260–Cys1275, Cys1277–Cys1286, Cys1497–Cys1526, Cys1533–Cys1546, Cys1540–Cys1555, Cys1557–Cys1567, Cys1709–Cys1732, Cys1738–Cys1750, Cys1744–Cys1759, Cys1761–Cys1770, and Cys1780–Cys1785. The 194-residue stretch at 1333–1526 folds into the Laminin G-like 1 domain; the sequence is SVSFDGEGLL…HKVGQVHEGC (194 aa). In terms of domain architecture, EGF-like 2 spans 1529-1568; that stretch reads RKDFCSTSDGQCSATSKCVNRWGGRICSCPQSVHSTGECV. One can recognise a Laminin G-like 2 domain in the interval 1577 to 1732; that stretch reads RGHSLFEEES…KKKGKTRAGC (156 aa). EGF-like domains lie at 1734-1771 and 1776-1808; these read VPNR…DTCL and VANV…KNCQ. Residue Asn1789 is glycosylated (N-linked (GlcNAc...) asparagine). An intrachain disulfide couples Cys1798 to Cys1807. Residues Asn1965, Asn1992, Asn2152, Asn2195, and Asn2228 are each glycosylated (N-linked (GlcNAc...) asparagine). The GAIN-B domain occupies 2054–2219; it reads EYSTLISKLW…TMFVNDQSSS (166 aa). Cys2174 and Cys2201 form a disulfide bridge. Residues 2174–2219 form a GPS region; sequence CVRFDEKSGTWTARGAALIGLNLTHAACEYNRIGVFTMFVNDQSSS. Residues 2230 to 2250 traverse the membrane as a helical segment; sequence TSPAIAGVALFLCFLSILLTL. Residues 2251-2261 lie on the Cytoplasmic side of the membrane; the sequence is SRRSLKTHSVR. The chain crosses the membrane as a helical span at residues 2262–2282; that stretch reads IGFILFFAINILNLFFVHKTA. Residues 2283–2292 lie on the Extracellular side of the membrane; that stretch reads INQAYCPVRN. A helical transmembrane segment spans residues 2293–2313; that stretch reads AMLSFTSSAPFAWLFLYGLYI. At 2314 to 2326 the chain is on the cytoplasmic side; sequence YRMLADGSSSPSL. The chain crosses the membrane as a helical span at residues 2327-2347; that stretch reads TTSLLVGIVFPCLISFTTFFV. The Extracellular segment spans residues 2348-2356; that stretch reads TDQCSLSPH. A helical membrane pass occupies residues 2357–2377; it reads LWLFWCIILPIGLFLLLSFYA. The Cytoplasmic portion of the chain corresponds to 2378-2401; the sequence is AATSVLVSLHKKYDVFVAKYNVKR. A helical membrane pass occupies residues 2402-2422; that stretch reads AVFQHFILTIFTLGMTLTGLF. Topologically, residues 2423-2437 are extracellular; it reads ANQLPLPMEIMEISQ. The helical transmembrane segment at 2438 to 2458 threads the bilayer; it reads SIIYLIAALVIFLWCVCDITT. Topologically, residues 2459–2596 are cytoplasmic; it reads KASDSNPSMW…KNTTSTFNRE (138 aa).

Belongs to the G-protein coupled receptor 2 family. LN-TM7 subfamily. In terms of tissue distribution, expressed in a region of neuropil around the nerve ring and the ventral cord (at protein level). Expressed in the head, tail, ventral cord, nerve ring and neurons including HSN neurons. Expressed in DA, VA, and VB and weakly in the DB cholinergic neurons. Not expressed in ventral D-type GABAergic motorneurons.

The protein localises to the cell membrane. It is found in the cell projection. It localises to the axon. Its subcellular location is the dendrite. Its function is as follows. During ventral cord development, required for axon fasciculation and navigation, mediating both pioneer and follower axon extension, guidance and track formation. Acts in CEPsh glia and SubL neurons to guide follower axons into the nerve ring. Promotes motorneuron development by positively regulating the extension of the anterior neurite of ventral D-type GABAergic motorneurons along the anterior-posterior axis of the ventral nerve cord. Plays a role in synaptogenesis by regulating synaptic vesicle accumulation at GABAergic and cholinergic neuromuscular junctions. This is Cadherin EGF LAG seven-pass G-type receptor fmi-1 from Caenorhabditis elegans.